The primary structure comprises 30 residues: Cycloviolin-D (30 aa).

The cyclopeptide (Gly-Asn) cross-link spans 1-30 (GFPCGESCVFIPCISAAIGCSCKNKVCYRN). 3 disulfide bridges follow: cysteine 4/cysteine 20, cysteine 8/cysteine 22, and cysteine 13/cysteine 27.

In terms of processing, this is a cyclic peptide.

In terms of biological role, probably participates in a plant defense mechanism. Has anti-HIV activity. The chain is Cycloviolin-D from Leonia cymosa (Sacha uba).